Reading from the N-terminus, the 459-residue chain is Ribulose bisphosphate carboxylase large chain (459 aa).

At Lys4 the chain carries N6,N6,N6-trimethyllysine. The substrate site is built by Asn113 and Thr163. The active-site Proton acceptor is Lys165. Lys167 provides a ligand contact to substrate. Lys191, Asp193, and Glu194 together coordinate Mg(2+). Lys191 is modified (N6-carboxylysine). Catalysis depends on His284, which acts as the Proton acceptor. Residues Arg285, His317, and Ser369 each contribute to the substrate site.

Belongs to the RuBisCO large chain family. Type I subfamily. Heterohexadecamer of 8 large chains and 8 small chains; disulfide-linked. The disulfide link is formed within the large subunit homodimers. The cofactor is Mg(2+). The disulfide bond which can form in the large chain dimeric partners within the hexadecamer appears to be associated with oxidative stress and protein turnover.

It is found in the plastid. Its subcellular location is the chloroplast. It catalyses the reaction 2 (2R)-3-phosphoglycerate + 2 H(+) = D-ribulose 1,5-bisphosphate + CO2 + H2O. It carries out the reaction D-ribulose 1,5-bisphosphate + O2 = 2-phosphoglycolate + (2R)-3-phosphoglycerate + 2 H(+). RuBisCO catalyzes two reactions: the carboxylation of D-ribulose 1,5-bisphosphate, the primary event in carbon dioxide fixation, as well as the oxidative fragmentation of the pentose substrate in the photorespiration process. Both reactions occur simultaneously and in competition at the same active site. The protein is Ribulose bisphosphate carboxylase large chain of Nyssa ogeche (Ogeechee tupelo).